Consider the following 331-residue polypeptide: Ketol-acid reductoisomerase (NADP(+)) (331 aa).

In terms of domain architecture, KARI N-terminal Rossmann spans 2–182; that stretch reads AQLFYDSDAD…GGTRAGILET (181 aa). Residues 25–28, Ser51, Ser53, and 83–86 contribute to the NADP(+) site; these read YGSQ and DEFQ. His108 is a catalytic residue. Gly134 contributes to the NADP(+) binding site. The KARI C-terminal knotted domain occupies 183-328; sequence NFKEETETDL…KGLRSMFSWL (146 aa). Residues Asp191, Glu195, Glu227, and Glu231 each contribute to the Mg(2+) site. A substrate-binding site is contributed by Ser252.

The protein belongs to the ketol-acid reductoisomerase family. The cofactor is Mg(2+).

It catalyses the reaction (2R)-2,3-dihydroxy-3-methylbutanoate + NADP(+) = (2S)-2-acetolactate + NADPH + H(+). The catalysed reaction is (2R,3R)-2,3-dihydroxy-3-methylpentanoate + NADP(+) = (S)-2-ethyl-2-hydroxy-3-oxobutanoate + NADPH + H(+). Its pathway is amino-acid biosynthesis; L-isoleucine biosynthesis; L-isoleucine from 2-oxobutanoate: step 2/4. It participates in amino-acid biosynthesis; L-valine biosynthesis; L-valine from pyruvate: step 2/4. Functionally, involved in the biosynthesis of branched-chain amino acids (BCAA). Catalyzes an alkyl-migration followed by a ketol-acid reduction of (S)-2-acetolactate (S2AL) to yield (R)-2,3-dihydroxy-isovalerate. In the isomerase reaction, S2AL is rearranged via a Mg-dependent methyl migration to produce 3-hydroxy-3-methyl-2-ketobutyrate (HMKB). In the reductase reaction, this 2-ketoacid undergoes a metal-dependent reduction by NADPH to yield (R)-2,3-dihydroxy-isovalerate. The polypeptide is Ketol-acid reductoisomerase (NADP(+)) (Synechococcus sp. (strain CC9902)).